Here is a 282-residue protein sequence, read N- to C-terminus: Ribosomal RNA small subunit methyltransferase A (282 aa).

Positions 1–21 (MPDFPKEHATPMSNRPPAHQA) are disordered. The S-adenosyl-L-methionine site is built by N28, L30, G55, E76, D101, and N126.

The protein belongs to the class I-like SAM-binding methyltransferase superfamily. rRNA adenine N(6)-methyltransferase family. RsmA subfamily.

Its subcellular location is the cytoplasm. The enzyme catalyses adenosine(1518)/adenosine(1519) in 16S rRNA + 4 S-adenosyl-L-methionine = N(6)-dimethyladenosine(1518)/N(6)-dimethyladenosine(1519) in 16S rRNA + 4 S-adenosyl-L-homocysteine + 4 H(+). Its function is as follows. Specifically dimethylates two adjacent adenosines (A1518 and A1519) in the loop of a conserved hairpin near the 3'-end of 16S rRNA in the 30S particle. May play a critical role in biogenesis of 30S subunits. This Chromohalobacter salexigens (strain ATCC BAA-138 / DSM 3043 / CIP 106854 / NCIMB 13768 / 1H11) protein is Ribosomal RNA small subunit methyltransferase A.